We begin with the raw amino-acid sequence, 127 residues long: Nitrogenase-stabilizing/protective protein NifW (127 aa).

This sequence belongs to the NifW family. As to quaternary structure, homotrimer; associates with NifD.

Functionally, may protect the nitrogenase Fe-Mo protein from oxidative damage. The protein is Nitrogenase-stabilizing/protective protein NifW of Rhizobium etli (strain ATCC 51251 / DSM 11541 / JCM 21823 / NBRC 15573 / CFN 42).